Consider the following 224-residue polypeptide: UPF0441 protein ECA0329 (224 aa).

The tract at residues T180–G224 is disordered. Positions Q204–G224 are enriched in low complexity.

This sequence belongs to the UPF0441 family.

The chain is UPF0441 protein ECA0329 from Pectobacterium atrosepticum (strain SCRI 1043 / ATCC BAA-672) (Erwinia carotovora subsp. atroseptica).